A 191-amino-acid polypeptide reads, in one-letter code: Superoxide dismutase [Mn/Fe] (191 aa).

Fe(3+)-binding residues include histidine 27, histidine 74, aspartate 157, and histidine 161. Mn(2+) is bound by residues histidine 27, histidine 74, aspartate 157, and histidine 161.

The protein belongs to the iron/manganese superoxide dismutase family. In terms of assembly, homodimer. Requires Mn(2+) as cofactor. Fe(3+) serves as cofactor.

It carries out the reaction 2 superoxide + 2 H(+) = H2O2 + O2. With respect to regulation, inhibited by hydrogen peroxide. Functionally, destroys superoxide anion radicals which are normally produced within the cells and which are toxic to biological systems. Catalyzes the dismutation of superoxide anion radicals into O2 and H2O2 by successive reduction and oxidation of the transition metal ion at the active site. This chain is Superoxide dismutase [Mn/Fe] (sodB), found in Porphyromonas gingivalis (strain ATCC BAA-308 / W83).